We begin with the raw amino-acid sequence, 533 residues long: Na(+)/H(+) antiporter NhaB (533 aa).

Transmembrane regions (helical) follow at residues 10–30 (IGNF…SFLI), 67–87 (PGGL…SQVL), 96–116 (VLLL…LLLF), 131–165 (VSLL…FYSI), 209–229 (LLMH…VGEP), 247–267 (IRMS…CYIV), 310–330 (AFIG…VGLI), 355–375 (EEAL…AVII), 396–416 (LVIF…VFVG), 454–474 (ATPN…APLI), and 485–505 (ALPY…IGFL).

It belongs to the NhaB Na(+)/H(+) (TC 2.A.34) antiporter family.

The protein resides in the cell inner membrane. It catalyses the reaction 2 Na(+)(in) + 3 H(+)(out) = 2 Na(+)(out) + 3 H(+)(in). Na(+)/H(+) antiporter that extrudes sodium in exchange for external protons. The polypeptide is Na(+)/H(+) antiporter NhaB (Shewanella oneidensis (strain ATCC 700550 / JCM 31522 / CIP 106686 / LMG 19005 / NCIMB 14063 / MR-1)).